Consider the following 72-residue polypeptide: Translation initiation factor IF-1 (72 aa).

The region spanning 1 to 72 (MAKDDVIVVD…DKGRITHRYK (72 aa)) is the S1-like domain.

This sequence belongs to the IF-1 family. As to quaternary structure, component of the 30S ribosomal translation pre-initiation complex which assembles on the 30S ribosome in the order IF-2 and IF-3, IF-1 and N-formylmethionyl-tRNA(fMet); mRNA recruitment can occur at any time during PIC assembly.

It localises to the cytoplasm. One of the essential components for the initiation of protein synthesis. Stabilizes the binding of IF-2 and IF-3 on the 30S subunit to which N-formylmethionyl-tRNA(fMet) subsequently binds. Helps modulate mRNA selection, yielding the 30S pre-initiation complex (PIC). Upon addition of the 50S ribosomal subunit IF-1, IF-2 and IF-3 are released leaving the mature 70S translation initiation complex. In Aliarcobacter butzleri (strain RM4018) (Arcobacter butzleri), this protein is Translation initiation factor IF-1.